The following is a 216-amino-acid chain: 3-isopropylmalate dehydratase small subunit (216 aa).

Belongs to the LeuD family. LeuD type 1 subfamily. In terms of assembly, heterodimer of LeuC and LeuD.

It carries out the reaction (2R,3S)-3-isopropylmalate = (2S)-2-isopropylmalate. It participates in amino-acid biosynthesis; L-leucine biosynthesis; L-leucine from 3-methyl-2-oxobutanoate: step 2/4. Functionally, catalyzes the isomerization between 2-isopropylmalate and 3-isopropylmalate, via the formation of 2-isopropylmaleate. The protein is 3-isopropylmalate dehydratase small subunit of Burkholderia thailandensis (strain ATCC 700388 / DSM 13276 / CCUG 48851 / CIP 106301 / E264).